The primary structure comprises 345 residues: L-threonine 3-dehydrogenase (345 aa).

C42 serves as a coordination point for Zn(2+). Active-site charge relay system residues include T44 and H47. Zn(2+) contacts are provided by H67, E68, C97, C100, C103, and C111. NAD(+) contacts are provided by residues I179, D199, R204, 266-268, and 290-291; these read LGI and IY.

This sequence belongs to the zinc-containing alcohol dehydrogenase family. As to quaternary structure, homotetramer. The cofactor is Zn(2+).

It localises to the cytoplasm. It carries out the reaction L-threonine + NAD(+) = (2S)-2-amino-3-oxobutanoate + NADH + H(+). Its pathway is amino-acid degradation; L-threonine degradation via oxydo-reductase pathway; glycine from L-threonine: step 1/2. Functionally, catalyzes the NAD(+)-dependent oxidation of L-threonine to 2-amino-3-ketobutyrate. This Rhizobium etli (strain CIAT 652) protein is L-threonine 3-dehydrogenase.